Consider the following 480-residue polypeptide: UDP-N-acetylmuramate--L-alanine ligase (480 aa).

Glycine 129–threonine 135 provides a ligand contact to ATP.

It belongs to the MurCDEF family.

It is found in the cytoplasm. The enzyme catalyses UDP-N-acetyl-alpha-D-muramate + L-alanine + ATP = UDP-N-acetyl-alpha-D-muramoyl-L-alanine + ADP + phosphate + H(+). Its pathway is cell wall biogenesis; peptidoglycan biosynthesis. Functionally, cell wall formation. The chain is UDP-N-acetylmuramate--L-alanine ligase from Syntrophus aciditrophicus (strain SB).